A 417-amino-acid chain; its full sequence is Serine hydroxymethyltransferase (417 aa).

(6S)-5,6,7,8-tetrahydrofolate contacts are provided by residues L121 and 125 to 127 (GHL). K230 is modified (N6-(pyridoxal phosphate)lysine). Residue E245 coordinates (6S)-5,6,7,8-tetrahydrofolate.

The protein belongs to the SHMT family. In terms of assembly, homodimer. The cofactor is pyridoxal 5'-phosphate.

Its subcellular location is the cytoplasm. The enzyme catalyses (6R)-5,10-methylene-5,6,7,8-tetrahydrofolate + glycine + H2O = (6S)-5,6,7,8-tetrahydrofolate + L-serine. Its pathway is one-carbon metabolism; tetrahydrofolate interconversion. It participates in amino-acid biosynthesis; glycine biosynthesis; glycine from L-serine: step 1/1. Catalyzes the reversible interconversion of serine and glycine with tetrahydrofolate (THF) serving as the one-carbon carrier. This reaction serves as the major source of one-carbon groups required for the biosynthesis of purines, thymidylate, methionine, and other important biomolecules. Also exhibits THF-independent aldolase activity toward beta-hydroxyamino acids, producing glycine and aldehydes, via a retro-aldol mechanism. This chain is Serine hydroxymethyltransferase, found in Desulfitobacterium hafniense (strain DSM 10664 / DCB-2).